The sequence spans 139 residues: Small ribosomal subunit protein eS6 (139 aa).

Belongs to the eukaryotic ribosomal protein eS6 family.

This is Small ribosomal subunit protein eS6 from Methanosarcina barkeri (strain Fusaro / DSM 804).